Here is a 1401-residue protein sequence, read N- to C-terminus: Bifunctional 3'-5' exonuclease/ATP-dependent helicase WRN (1401 aa).

Residues 1 to 271 are interaction with WRNIP1; it reads METTSLQRKF…FPVTCRNLET (271 aa). The KBM 1 signature appears at 6-18; sequence LQRKFPEWMSMQS. A 3'-5' exonuclease domain is found at 51 to 223; that stretch reads YEASDCSFLS…GLIIYQKLGN (173 aa). Residues Asp76 and Glu78 each coordinate Zn(2+). A Glycyl lysine isopeptide (Lys-Gly) (interchain with G-Cter in SUMO2) cross-link involves residue Lys148. Asp210 is a Zn(2+) binding site. Glycyl lysine isopeptide (Lys-Gly) (interchain with G-Cter in SUMO2) cross-links involve residues Lys235 and Lys246. The interval 401 to 427 is disordered; sequence QAKEEKYNDVSHQLSEHLSPNDDENDS. Phosphoserine occurs at positions 419, 433, and 444. Positions 464-492 are disordered; it reads GTNGRLPPEEEDGHGNEAIKEEQEEEDHL. Residues 522-688 form the Helicase ATP-binding domain; sequence HSVLEERRDN…ISCLNLKDPQ (167 aa). 535–542 provides a ligand contact to ATP; that stretch reads MATGYGKS. Positions 632–635 match the DEAH box motif; sequence DEAH. The Helicase C-terminal domain occupies 713 to 866; that stretch reads DLKPFLVRKA…KLKMMVKMEK (154 aa). 4 residues coordinate Zn(2+): Cys873, Cys900, Cys901, and Cys904. An interaction with DNA region spans residues 952 to 958; sequence RGSNSQR. Positions 1041-1106 are disordered; it reads LLPSSNPVSP…PSPGTSSSPL (66 aa). Positions 1043-1069 are enriched in polar residues; it reads PSSNPVSPETTQHSSNQNPAGLTTKQS. A compositionally biased stretch (basic and acidic residues) spans 1070–1081; sequence NLERTHSYKVPE. Position 1098 is a phosphoserine (Ser1098). Positions 1115 to 1194 constitute an HRDC domain; sequence LDARTGLYAR…KHFCQVTSVQ (80 aa). Positions 1323–1332 are enriched in polar residues; the sequence is GSDSRTQPPC. The segment at 1323 to 1401 is disordered; sequence GSDSRTQPPC…AKTKKKGLFS (79 aa). Residues 1348-1358 are compositionally biased toward basic and acidic residues; sequence ESCKESKEAVT. Ser1364 is modified (phosphoserine). The KBM 2 motif lies at 1367–1376; sequence SKRKLPEWFA. Polar residues predominate over residues 1382-1392; sequence SADTGSSSSMA. The XLM signature appears at 1388-1401; that stretch reads SSSMAKTKKKGLFS.

It belongs to the helicase family. RecQ subfamily. In terms of assembly, monomer, and homooligomer. May exist as homodimer, homotrimer, homotetramer and/or homohexamer. Homotetramer, or homohexamer, when bound to DNA. Interacts via its N-terminal domain with WRNIP1. Interacts with EXO1, PCNA and SUPV3L1. Interacts with PML (isoform PML-4). Interacts (via KBM motif) with XRCC5 and XRCC6; promoting recruitment to DNA damage sites. Interacts with RECQL5; this interaction stimulates WRN helicase activity on DNA fork duplexes. The cofactor is Zn(2+). It depends on Mn(2+) as a cofactor. Phosphorylated by PRKDC. As to expression, expressed ubiquitously in most organs at a low level, highly expressed in testis, ovary and spleen.

Its subcellular location is the nucleus. It localises to the nucleolus. It is found in the nucleoplasm. The protein localises to the chromosome. The enzyme catalyses Couples ATP hydrolysis with the unwinding of duplex DNA by translocating in the 3'-5' direction.. It carries out the reaction ATP + H2O = ADP + phosphate + H(+). Zinc ions stimulate the exonuclease activity. In terms of biological role, multifunctional enzyme that has magnesium and ATP-dependent 3'-5' DNA-helicase activity. Has 3'-&gt;5' exonuclease activity on forked dsDNA. Has no nuclease activity towards single-stranded DNA or blunt-ended double-stranded DNA. Binds preferentially to DNA substrates containing alternate secondary structures, such as replication forks and Holliday junctions. May play an important role in the dissociation of joint DNA molecules that can arise as products of homologous recombination, at stalled replication forks or during DNA repair. Alleviates stalling of DNA polymerases at the site of DNA lesions. Unwinds some G-quadruplex DNA. Plays a role in the formation of DNA replication focal centers; stably associates with foci elements generating binding sites for RP-A. Plays a role in double-strand break repair after gamma-irradiation. The sequence is that of Bifunctional 3'-5' exonuclease/ATP-dependent helicase WRN (Wrn) from Mus musculus (Mouse).